We begin with the raw amino-acid sequence, 213 residues long: ATP phosphoribosyltransferase (213 aa).

It belongs to the ATP phosphoribosyltransferase family. Short subfamily. In terms of assembly, heteromultimer composed of HisG and HisZ subunits.

The protein localises to the cytoplasm. The enzyme catalyses 1-(5-phospho-beta-D-ribosyl)-ATP + diphosphate = 5-phospho-alpha-D-ribose 1-diphosphate + ATP. The protein operates within amino-acid biosynthesis; L-histidine biosynthesis; L-histidine from 5-phospho-alpha-D-ribose 1-diphosphate: step 1/9. Functionally, catalyzes the condensation of ATP and 5-phosphoribose 1-diphosphate to form N'-(5'-phosphoribosyl)-ATP (PR-ATP). Has a crucial role in the pathway because the rate of histidine biosynthesis seems to be controlled primarily by regulation of HisG enzymatic activity. This chain is ATP phosphoribosyltransferase (hisG), found in Bacillus subtilis (strain 168).